A 323-amino-acid chain; its full sequence is Beta-ketoacyl-[acyl-carrier-protein] synthase III (323 aa).

Residues cysteine 113 and histidine 250 contribute to the active site. The ACP-binding stretch occupies residues 251–255 (QANKR). Asparagine 280 is an active-site residue.

The protein belongs to the thiolase-like superfamily. FabH family. Homodimer.

It is found in the cytoplasm. The catalysed reaction is malonyl-[ACP] + acetyl-CoA + H(+) = 3-oxobutanoyl-[ACP] + CO2 + CoA. It participates in lipid metabolism; fatty acid biosynthesis. Its function is as follows. Catalyzes the condensation reaction of fatty acid synthesis by the addition to an acyl acceptor of two carbons from malonyl-ACP. Catalyzes the first condensation reaction which initiates fatty acid synthesis and may therefore play a role in governing the total rate of fatty acid production. Possesses both acetoacetyl-ACP synthase and acetyl transacylase activities. Its substrate specificity determines the biosynthesis of branched-chain and/or straight-chain of fatty acids. This is Beta-ketoacyl-[acyl-carrier-protein] synthase III from Mesorhizobium japonicum (strain LMG 29417 / CECT 9101 / MAFF 303099) (Mesorhizobium loti (strain MAFF 303099)).